We begin with the raw amino-acid sequence, 1434 residues long: Ankyrin and armadillo repeat-containing protein (1434 aa).

The chain crosses the membrane as a helical span at residues 309-329; sequence IRRGIGYLKLICFLIPFLLSL. ANK repeat units lie at residues 532–561, 569–598, 602–631, 638–667, and 671–701; these read AGYTIFHHAALHNRVSIICQLCNANFKVNQ, QGPTPLHLAAQACSLETTVCLLCSKADYTL, RGWMPIHFAAFYDNVCIIIALCRKDPSLLE, NQCTPLLLAATSGALDTIQYLFSIGANWRK, and KGNNIIHLSVLTFHTEVLKYIIKLNIPELPV. 6 ARM repeats span residues 732 to 771, 773 to 812, 814 to 852, 855 to 894, 897 to 936, and 1072 to 1112; these read DQYWRCILDAGTIPALINLLKSSKIKLQCKTVGLLSNIST, KSAVHALVEAGGIPSLINLLVCDEPEVHSRCAVILYDIAQ, ENKDVIAKYNGIPSLINLLNLNIENVLVNVMNCIRVLCI, ENNQRAVREHKGLPYLIRFLSSDSDVLKAVSSAAIAEVGR, KEIQDAIAMEGAIPPLVALFKGKQISVQMKGAMAVESLAS, and PVSQ…CIVL.

As to expression, ubiquitously expressed with highest level in pancreas and lowest in skeletal muscle.

It localises to the membrane. This is Ankyrin and armadillo repeat-containing protein (ANKAR) from Homo sapiens (Human).